The sequence spans 396 residues: Subtilisin-like protease 5 (396 aa).

Residues 1 to 20 (MTGFLTILSLSLAALSVTNA) form the signal peptide. Residues 21-116 (AQILSVPQGA…VEPDAIIKQH (96 aa)) constitute a propeptide that is removed on maturation. Residues 37 to 114 (YIVVMKDDTS…AFVEPDAIIK (78 aa)) enclose the Inhibitor I9 domain. Residues 125–396 (PWGLSRLSNR…SRLLYNGSGR (272 aa)) enclose the Peptidase S8 domain. Residues aspartate 156 and histidine 187 each act as charge relay system in the active site. N-linked (GlcNAc...) asparagine glycosylation is found at asparagine 230 and asparagine 248. The active-site Charge relay system is serine 342. Residues 376-396 (PTIRNPGPDTTSRLLYNGSGR) are disordered. The N-linked (GlcNAc...) asparagine glycan is linked to asparagine 392.

It belongs to the peptidase S8 family.

It is found in the secreted. Functionally, secreted subtilisin-like serine protease with keratinolytic activity that contributes to pathogenicity. This is Subtilisin-like protease 5 (SUB5) from Arthroderma gypseum (strain ATCC MYA-4604 / CBS 118893) (Microsporum gypseum).